The primary structure comprises 224 residues: Deoxyribose-phosphate aldolase (224 aa).

The active-site Proton donor/acceptor is D91. K152 serves as the catalytic Schiff-base intermediate with acetaldehyde. The active-site Proton donor/acceptor is the K181.

The protein belongs to the DeoC/FbaB aldolase family. DeoC type 1 subfamily.

The protein localises to the cytoplasm. The enzyme catalyses 2-deoxy-D-ribose 5-phosphate = D-glyceraldehyde 3-phosphate + acetaldehyde. The protein operates within carbohydrate degradation; 2-deoxy-D-ribose 1-phosphate degradation; D-glyceraldehyde 3-phosphate and acetaldehyde from 2-deoxy-alpha-D-ribose 1-phosphate: step 2/2. Functionally, catalyzes a reversible aldol reaction between acetaldehyde and D-glyceraldehyde 3-phosphate to generate 2-deoxy-D-ribose 5-phosphate. The sequence is that of Deoxyribose-phosphate aldolase from Mycoplasma pneumoniae (strain ATCC 29342 / M129 / Subtype 1) (Mycoplasmoides pneumoniae).